The chain runs to 255 residues: MLLVIDVGNTNTVFALHDGEQWVNQWRSATDSTKTADDHASWLWRLADMQGVDLSRVQGCVVSSVVPHAQFNFRNLARRYLNVEPLFIGEPGLKTGMAVRVRHPEQVGADRIVSALGAHVAYPGDLIVIDSGTATTFDIVSADGAFEGGIISPGIYLSMRALHDAAAQLPRIAIQKPPQVIGKDTVSAMQSGVFIGYIELIDGLVRRIKAEWGRPMTVIATGGVASLFEGASETIDYYDQDILIRGLLEVWKRNR.

6–13 lines the ATP pocket; the sequence is DVGNTNTV. 108-111 serves as a coordination point for substrate; that stretch reads GADR. Aspartate 110 (proton acceptor) is an active-site residue. Residue aspartate 130 coordinates K(+). Threonine 133 contacts ATP. Threonine 185 serves as a coordination point for substrate.

This sequence belongs to the type III pantothenate kinase family. In terms of assembly, homodimer. NH4(+) is required as a cofactor. K(+) serves as cofactor.

The protein resides in the cytoplasm. It carries out the reaction (R)-pantothenate + ATP = (R)-4'-phosphopantothenate + ADP + H(+). It functions in the pathway cofactor biosynthesis; coenzyme A biosynthesis; CoA from (R)-pantothenate: step 1/5. Functionally, catalyzes the phosphorylation of pantothenate (Pan), the first step in CoA biosynthesis. The protein is Type III pantothenate kinase of Hyphomonas neptunium (strain ATCC 15444).